The primary structure comprises 289 residues: 4-diphosphocytidyl-2-C-methyl-D-erythritol kinase (289 aa).

K15 is a catalytic residue. 100–110 provides a ligand contact to ATP; sequence PVSAGLAGGSA. D140 is an active-site residue.

Belongs to the GHMP kinase family. IspE subfamily.

The catalysed reaction is 4-CDP-2-C-methyl-D-erythritol + ATP = 4-CDP-2-C-methyl-D-erythritol 2-phosphate + ADP + H(+). The protein operates within isoprenoid biosynthesis; isopentenyl diphosphate biosynthesis via DXP pathway; isopentenyl diphosphate from 1-deoxy-D-xylulose 5-phosphate: step 3/6. Catalyzes the phosphorylation of the position 2 hydroxy group of 4-diphosphocytidyl-2C-methyl-D-erythritol. The protein is 4-diphosphocytidyl-2-C-methyl-D-erythritol kinase of Anaplasma marginale (strain Florida).